The primary structure comprises 216 residues: Pyridoxine/pyridoxamine 5'-phosphate oxidase (216 aa).

FMN contacts are provided by residues 63–68, 78–79, K85, and Q107; these read RMVLMK and YS. K68 contributes to the substrate binding site. Residues Y125 and R129 each coordinate substrate. Residues 142–143 and W187 each bind FMN; that span reads QS. A substrate-binding site is contributed by 193-195; it reads RLH. R197 contributes to the FMN binding site.

This sequence belongs to the pyridoxamine 5'-phosphate oxidase family. In terms of assembly, homodimer. FMN serves as cofactor.

It carries out the reaction pyridoxamine 5'-phosphate + O2 + H2O = pyridoxal 5'-phosphate + H2O2 + NH4(+). The enzyme catalyses pyridoxine 5'-phosphate + O2 = pyridoxal 5'-phosphate + H2O2. The protein operates within cofactor metabolism; pyridoxal 5'-phosphate salvage; pyridoxal 5'-phosphate from pyridoxamine 5'-phosphate: step 1/1. It participates in cofactor metabolism; pyridoxal 5'-phosphate salvage; pyridoxal 5'-phosphate from pyridoxine 5'-phosphate: step 1/1. Its function is as follows. Catalyzes the oxidation of either pyridoxine 5'-phosphate (PNP) or pyridoxamine 5'-phosphate (PMP) into pyridoxal 5'-phosphate (PLP). The chain is Pyridoxine/pyridoxamine 5'-phosphate oxidase from Bradyrhizobium sp. (strain ORS 278).